We begin with the raw amino-acid sequence, 584 residues long: Glutathione hydrolase proenzyme (584 aa).

The signal sequence occupies residues 1-25 (MAPAAMNLLCTVLYLLSSFAQVSDA). The N-linked (GlcNAc...) asparagine glycan is linked to Asn-111. Arg-120 contributes to the L-glutamate binding site. N-linked (GlcNAc...) asparagine glycans are attached at residues Asn-135, Asn-262, Asn-272, Asn-350, and Asn-370. The Nucleophile role is filled by Thr-395. Residues Thr-413, Glu-434, and 465–466 (SS) each bind L-glutamate. N-linked (GlcNAc...) asparagine glycosylation occurs at Asn-547.

This sequence belongs to the gamma-glutamyltransferase family. In terms of assembly, heterodimer composed of the light and heavy chains. The active site is located in the light chain. In terms of processing, cleaved by autocatalysis into a large and a small subunit and the autocatalytic cleavage is essential to the functional activation of the enzyme.

It is found in the secreted. It carries out the reaction an N-terminal (5-L-glutamyl)-[peptide] + an alpha-amino acid = 5-L-glutamyl amino acid + an N-terminal L-alpha-aminoacyl-[peptide]. It catalyses the reaction glutathione + H2O = L-cysteinylglycine + L-glutamate. The catalysed reaction is an S-substituted glutathione + H2O = an S-substituted L-cysteinylglycine + L-glutamate. The enzyme catalyses leukotriene C4 + H2O = leukotriene D4 + L-glutamate. Its pathway is sulfur metabolism; glutathione metabolism. In terms of biological role, cleaves the gamma-glutamyl bond of extracellular glutathione (gamma-Glu-Cys-Gly), glutathione conjugates, and other gamma-glutamyl compounds. The metabolism of glutathione releases free glutamate and the dipeptide cysteinyl-glycine, which is hydrolyzed to cysteine and glycine by dipeptidases. In the presence of high concentrations of dipeptides and some amino acids, can also catalyze a transpeptidation reaction, transferring the gamma-glutamyl moiety to an acceptor amino acid to form a new gamma-glutamyl compound. Initiates extracellular glutathione (GSH) breakdown, provides cells with a local cysteine supply and contributes to maintain intracellular GSH level. It is part of the cell antioxidant defense mechanism. The polypeptide is Glutathione hydrolase proenzyme (Arthroderma benhamiae (strain ATCC MYA-4681 / CBS 112371) (Trichophyton mentagrophytes)).